A 200-amino-acid polypeptide reads, in one-letter code: Pre-mRNA cleavage factor Im 25 kDa subunit 2 (200 aa).

The 128-residue stretch at 45–172 (GMRTSVEGIL…KLLAVPLFEL (128 aa)) folds into the Nudix hydrolase domain. The tract at residues 72 to 74 (TFC) is interaction with RNA. Positions 79–100 (GRLKPGENEADGLKRKLTSKLG) match the Nudix box motif.

Belongs to the Nudix hydrolase family. CPSF5 subfamily. Homodimer. Component of the cleavage factor Im (CFIm) complex. Forms a complex with cleavage and polyadenylation specificity factor (CPSF) subunits FIPS5, PAPS4 and CPSF30.

Its subcellular location is the nucleus. Component of the cleavage factor Im (CFIm) complex that plays a key role in pre-mRNA 3'-processing. Involved in association with CPSF6 or CPSF7 in pre-MRNA 3'-end poly(A) site cleavage and poly(A) addition. NUDT21/CPSF5 binds to cleavage and polyadenylation RNA substrates. The homodimer mediates simultaneous sequence-specific recognition of two 5'-UGUA-3' elements within the pre-mRNA. Binds to, but does not hydrolyze mono- and di-adenosine nucleotides. May have a role in mRNA export. The chain is Pre-mRNA cleavage factor Im 25 kDa subunit 2 from Arabidopsis thaliana (Mouse-ear cress).